Consider the following 400-residue polypeptide: DNA polymerase IV (400 aa).

The UmuC domain maps to 8 to 191 (ILLCDANSFF…LPVRELFGIG (184 aa)). Residues aspartate 12 and aspartate 109 each coordinate Mg(2+). Glutamate 110 is a catalytic residue.

The protein belongs to the DNA polymerase type-Y family. In terms of assembly, monomer. It depends on Mg(2+) as a cofactor.

It is found in the cytoplasm. The enzyme catalyses DNA(n) + a 2'-deoxyribonucleoside 5'-triphosphate = DNA(n+1) + diphosphate. Poorly processive, error-prone DNA polymerase involved in untargeted mutagenesis. Copies undamaged DNA at stalled replication forks, which arise in vivo from mismatched or misaligned primer ends. These misaligned primers can be extended by PolIV. Exhibits no 3'-5' exonuclease (proofreading) activity. May be involved in translesional synthesis, in conjunction with the beta clamp from PolIII. The chain is DNA polymerase IV from Moorella thermoacetica (strain ATCC 39073 / JCM 9320).